A 333-amino-acid polypeptide reads, in one-letter code: COMPASS-like H3K4 histone methylase component WDR5B (333 aa).

WD repeat units follow at residues 1-40 (MPSG…KTLE), 41-80 (GHTA…LIHR), 83-122 (GHSS…ECLK), 126-167 (GHTN…RMIK), 169-207 (HSMP…CLKT), 211-252 (DKSP…KVYT), 253-295 (GHTN…ILQR), and 298-333 (GHTD…KQDA).

Unlike WDR5A, does not interact with RBL or TRO.

The polypeptide is COMPASS-like H3K4 histone methylase component WDR5B (Arabidopsis thaliana (Mouse-ear cress)).